The primary structure comprises 915 residues: Translation initiation factor IF-2 (915 aa).

Disordered stretches follow at residues 1-105 and 121-295; these read MSEG…RALT and VEAA…RAAI. A compositionally biased stretch (low complexity) spans 57-81; it reads PGTPSAPEGGSSSAPAPQSGNAPQG. Positions 84–101 are enriched in gly residues; sequence RSGGGNRGSGRGGAGGAG. Basic and acidic residues-rich tracts occupy residues 121–135 and 143–180; these read VEAARREVERREQEK and EEARRREEEAKRAAEEEARRKEQEEADRIAAEAARKAA. Pro residues predominate over residues 186 to 195; the sequence is AEAPPVPPPA. Composition is skewed to low complexity over residues 201 to 213 and 230 to 239; these read AAPSSRSAPSRTA and KVPVAAPSAP. The span at 243-256 shows a compositional bias: basic and acidic residues; it reads RLRERGDEGEEERK. Low complexity predominate over residues 266-278; that stretch reads PAPRKAAAPVAKK. The span at 279-295 shows a compositional bias: basic and acidic residues; that stretch reads AVAEPRRGGRIDVRAAI. The region spanning 414-584 is the tr-type G domain; sequence PRPPVVTVMG…LLQAEVLDLK (171 aa). Residues 423-430 form a G1 region; that stretch reads GHVDHGKT. Position 423–430 (423–430) interacts with GTP; it reads GHVDHGKT. The segment at 448–452 is G2; that stretch reads GITQH. The interval 470–473 is G3; that stretch reads DTPG. GTP is bound by residues 470–474 and 524–527; these read DTPGH and NKCD. The tract at residues 524-527 is G4; the sequence is NKCD. Residues 560–562 form a G5 region; it reads SAL.

The protein belongs to the TRAFAC class translation factor GTPase superfamily. Classic translation factor GTPase family. IF-2 subfamily.

It is found in the cytoplasm. Functionally, one of the essential components for the initiation of protein synthesis. Protects formylmethionyl-tRNA from spontaneous hydrolysis and promotes its binding to the 30S ribosomal subunits. Also involved in the hydrolysis of GTP during the formation of the 70S ribosomal complex. The chain is Translation initiation factor IF-2 from Granulibacter bethesdensis (strain ATCC BAA-1260 / CGDNIH1).